Here is a 118-residue protein sequence, read N- to C-terminus: MDDVIVVTSDYVPGHRIVKILGVTWGLTVRSRGLGGNLVAGLRTIAGGEIKEYVTLLNDARETALQRLISSAKAMGATAVINMRFDTSDMAQAMTEIVAYGTAVVTEPVENSQNVTLS.

Belongs to the UPF0145 family.

In Picrophilus torridus (strain ATCC 700027 / DSM 9790 / JCM 10055 / NBRC 100828 / KAW 2/3), this protein is UPF0145 protein PTO0347.